The chain runs to 434 residues: Glutamyl-tRNA reductase (434 aa).

Residues 52–55, S115, 120–122, and Q126 contribute to the substrate site; these read TCNR and ETQ. C53 serves as the catalytic Nucleophile. 195–200 is a binding site for NADP(+); that stretch reads GAGEMI.

This sequence belongs to the glutamyl-tRNA reductase family. Homodimer.

The catalysed reaction is (S)-4-amino-5-oxopentanoate + tRNA(Glu) + NADP(+) = L-glutamyl-tRNA(Glu) + NADPH + H(+). It participates in porphyrin-containing compound metabolism; protoporphyrin-IX biosynthesis; 5-aminolevulinate from L-glutamyl-tRNA(Glu): step 1/2. Functionally, catalyzes the NADPH-dependent reduction of glutamyl-tRNA(Glu) to glutamate 1-semialdehyde (GSA). The protein is Glutamyl-tRNA reductase of Cupriavidus metallidurans (strain ATCC 43123 / DSM 2839 / NBRC 102507 / CH34) (Ralstonia metallidurans).